Here is a 253-residue protein sequence, read N- to C-terminus: 5-oxoprolinase subunit A (253 aa).

The protein belongs to the LamB/PxpA family. In terms of assembly, forms a complex composed of PxpA, PxpB and PxpC.

It catalyses the reaction 5-oxo-L-proline + ATP + 2 H2O = L-glutamate + ADP + phosphate + H(+). Functionally, catalyzes the cleavage of 5-oxoproline to form L-glutamate coupled to the hydrolysis of ATP to ADP and inorganic phosphate. The sequence is that of 5-oxoprolinase subunit A from Bacillus cereus (strain AH820).